The sequence spans 539 residues: Putative cysteine ligase BshC (539 aa).

ADP contacts are provided by residues Ser146 and 384 to 386 (ERH). Residues 455-475 (LLKNAAFIQDQLQFLERTVMK) are a coiled coil. Residues 490–493 (RIQN), Trp506, and Tyr510 contribute to the ADP site.

Belongs to the BshC family. Homodimer in solution.

Involved in bacillithiol (BSH) biosynthesis. May catalyze the last step of the pathway, the addition of cysteine to glucosamine malate (GlcN-Mal) to generate BSH. The polypeptide is Putative cysteine ligase BshC (Bacillus subtilis (strain 168)).